The primary structure comprises 354 residues: Methionine import ATP-binding protein MetN (354 aa).

The 243-residue stretch at 8 to 250 (LDHIDITFHQ…PREDLTKDFI (243 aa)) folds into the ABC transporter domain. 42–49 (GYSGAGKS) is a binding site for ATP.

Belongs to the ABC transporter superfamily. Methionine importer (TC 3.A.1.24) family. The complex is composed of two ATP-binding proteins (MetN), two transmembrane proteins (MetI) and a solute-binding protein (MetQ).

Its subcellular location is the cell membrane. It carries out the reaction L-methionine(out) + ATP + H2O = L-methionine(in) + ADP + phosphate + H(+). The enzyme catalyses D-methionine(out) + ATP + H2O = D-methionine(in) + ADP + phosphate + H(+). Functionally, part of the ABC transporter complex MetNIQ involved in methionine import. Responsible for energy coupling to the transport system. The polypeptide is Methionine import ATP-binding protein MetN (Streptococcus mutans serotype c (strain ATCC 700610 / UA159)).